Consider the following 196-residue polypeptide: Probable malonic semialdehyde reductase RutE (196 aa).

It belongs to the nitroreductase family. HadB/RutE subfamily. It depends on FMN as a cofactor.

The enzyme catalyses 3-hydroxypropanoate + NADP(+) = 3-oxopropanoate + NADPH + H(+). Its function is as follows. May reduce toxic product malonic semialdehyde to 3-hydroxypropionic acid, which is excreted. The chain is Probable malonic semialdehyde reductase RutE from Escherichia coli O8 (strain IAI1).